A 182-amino-acid polypeptide reads, in one-letter code: UPF0423 protein BRA0381/BS1330_II0378 (182 aa).

The N-terminal stretch at 1–24 is a signal peptide; the sequence is MKNLFRTAALMVPLSLALAYGAQA.

This sequence belongs to the UPF0423 family.

In Brucella suis biovar 1 (strain 1330), this protein is UPF0423 protein BRA0381/BS1330_II0378.